The chain runs to 318 residues: Aspartate carbamoyltransferase catalytic subunit (318 aa).

Carbamoyl phosphate-binding residues include Arg-66 and Thr-67. An L-aspartate-binding site is contributed by Lys-94. Carbamoyl phosphate contacts are provided by Arg-116, His-144, and Gln-147. The L-aspartate site is built by Arg-177 and Arg-231. The carbamoyl phosphate site is built by Gly-272 and Pro-273.

The protein belongs to the aspartate/ornithine carbamoyltransferase superfamily. ATCase family. As to quaternary structure, heterododecamer (2C3:3R2) of six catalytic PyrB chains organized as two trimers (C3), and six regulatory PyrI chains organized as three dimers (R2).

It carries out the reaction carbamoyl phosphate + L-aspartate = N-carbamoyl-L-aspartate + phosphate + H(+). It functions in the pathway pyrimidine metabolism; UMP biosynthesis via de novo pathway; (S)-dihydroorotate from bicarbonate: step 2/3. Functionally, catalyzes the condensation of carbamoyl phosphate and aspartate to form carbamoyl aspartate and inorganic phosphate, the committed step in the de novo pyrimidine nucleotide biosynthesis pathway. The chain is Aspartate carbamoyltransferase catalytic subunit from Frankia casuarinae (strain DSM 45818 / CECT 9043 / HFP020203 / CcI3).